A 394-amino-acid polypeptide reads, in one-letter code: Elongation factor Tu 1 (394 aa).

One can recognise a tr-type G domain in the interval 10–204; that stretch reads KPHVNVGTIG…ALDTYIPEPA (195 aa). Positions 19 to 26 are G1; sequence GHVDHGKT. 19 to 26 contributes to the GTP binding site; it reads GHVDHGKT. Residue Thr-26 coordinates Mg(2+). Positions 60–64 are G2; the sequence is GITIN. A G3 region spans residues 81–84; it reads DCPG. GTP contacts are provided by residues 81-85 and 136-139; these read DCPGH and NKCD. The G4 stretch occupies residues 136-139; that stretch reads NKCD. A G5 region spans residues 174–176; that stretch reads SAL.

Belongs to the TRAFAC class translation factor GTPase superfamily. Classic translation factor GTPase family. EF-Tu/EF-1A subfamily. As to quaternary structure, monomer.

It localises to the cytoplasm. It carries out the reaction GTP + H2O = GDP + phosphate + H(+). In terms of biological role, GTP hydrolase that promotes the GTP-dependent binding of aminoacyl-tRNA to the A-site of ribosomes during protein biosynthesis. The sequence is that of Elongation factor Tu 1 from Shewanella frigidimarina (strain NCIMB 400).